A 485-amino-acid polypeptide reads, in one-letter code: MGEPGFFVTGDRAGGRSWCLRRVGMSAGWLLLEDGCEVTVGRGFGVTYQLVSKICPLMISRNHCVLKQNPEGQWTIMDNKSLNGVWLNRARLEPLRVYSIHQGDYIQLGVPLENKENAEYEYEVTEEDWETIYPCLSPKNDQMIEKNKELRTKRKFSLDELAGPGAEGPSNLKSKINKVSCESGQPVKSQGKGEVASTPSDNLDPKLTALEPSKTTGAPIYPGFPKVTEVHHEQKASNSSASQRSLQMFKVTMSRILRLKIQMQEKHEAVMNVKKQTQKGNSKKVVQMEQELQDLQSQLCAEQAQQQARVEQLEKTFQEEEQHLQGLEIAQGEKDLKQQLAQALQEHWALMEELNRSKKDFEAIIQAKNKELEQTKEEKEKMQAQKEEVLSHMNDVLENELQCIICSEYFIEAVTLNCAHSFCSYCINEWMKRKIECPICRKDIKSKTYSLVLDNCINKMVNNLSSEVKERRIVLIRERKAKRLF.

Residues 38-92 form the FHA domain; the sequence is VTVGRGFGVTYQLVSKICPLMISRNHCVLKQNPEGQWTIMDNKSLNGVWLNRARL. The required for interaction with PIWIL1 stretch occupies residues 68–72; that stretch reads QNPEG. Position 157 is a phosphoserine (S157). The tract at residues 181–220 is disordered; that stretch reads CESGQPVKSQGKGEVASTPSDNLDPKLTALEPSKTTGAPI. Residues 403–441 form an RING-type zinc finger; it reads CIICSEYFIEAVTLNCAHSFCSYCINEWMKRKIECPICR.

It belongs to the RNF8 family. Homodimer. Forms a E2-E3 ubiquitin ligase complex composed of the RNF8 homodimer and a E2 heterodimer of UBE2N and UBE2V2. Interacts with class III E2s, including UBE2E1, UBE2E2, and UBE2E3 and with UBE2N. Interacts with RXRA. Interacts (via FHA domain) with ATM-phosphorylated MDC1. Interacts (via FHA domain) with 'Thr-4827' phosphorylated HERC2 (via C-terminus). Interacts with PIWIL1; leading to sequester RNF8 in the cytoplasm. Interacts with WRAP53/TCAB1. As to quaternary structure, (Microbial infection) Interacts (via FHA domain) with phosphorylated human herpesvirus 1 ICP0 protein; leading to RNF8 degradation by the proteasome. In terms of processing, autoubiquitinated through 'Lys-48' and 'Lys-63' of ubiquitin. 'Lys-63' polyubiquitination is mediated by UBE2N. 'Lys-29'-type polyubiquitination is also observed, but it doesn't require its own functional RING-type zinc finger. Ubiquitous. In fetal tissues, highest expression in brain, thymus and liver. In adult tissues, highest levels in brain and testis, lowest levels in peripheral blood cells.

It localises to the nucleus. It is found in the cytoplasm. The protein localises to the midbody. Its subcellular location is the chromosome. The protein resides in the telomere. It catalyses the reaction S-ubiquitinyl-[E2 ubiquitin-conjugating enzyme]-L-cysteine + [acceptor protein]-L-lysine = [E2 ubiquitin-conjugating enzyme]-L-cysteine + N(6)-ubiquitinyl-[acceptor protein]-L-lysine.. The protein operates within protein modification; protein ubiquitination. Its function is as follows. E3 ubiquitin-protein ligase that plays a key role in DNA damage signaling via 2 distinct roles: by mediating the 'Lys-63'-linked ubiquitination of histones H2A and H2AX and promoting the recruitment of DNA repair proteins at double-strand breaks (DSBs) sites, and by catalyzing 'Lys-48'-linked ubiquitination to remove target proteins from DNA damage sites. Following DNA DSBs, it is recruited to the sites of damage by ATM-phosphorylated MDC1 and catalyzes the 'Lys-63'-linked ubiquitination of histones H2A and H2AX, thereby promoting the formation of TP53BP1 and BRCA1 ionizing radiation-induced foci (IRIF). Also controls the recruitment of UIMC1-BRCC3 (RAP80-BRCC36) and PAXIP1/PTIP to DNA damage sites. Promotes the recruitment of NBN to DNA damage sites by catalyzing 'Lys-6'-linked ubiquitination of NBN. Also recruited at DNA interstrand cross-links (ICLs) sites and catalyzes 'Lys-63'-linked ubiquitination of histones H2A and H2AX, leading to recruitment of FAAP20/C1orf86 and Fanconi anemia (FA) complex, followed by interstrand cross-link repair. H2A ubiquitination also mediates the ATM-dependent transcriptional silencing at regions flanking DSBs in cis, a mechanism to avoid collision between transcription and repair intermediates. Promotes the formation of 'Lys-63'-linked polyubiquitin chains via interactions with the specific ubiquitin-conjugating UBE2N/UBC13 and ubiquitinates non-histone substrates such as PCNA. Substrates that are polyubiquitinated at 'Lys-63' are usually not targeted for degradation. Also catalyzes the formation of 'Lys-48'-linked polyubiquitin chains via interaction with the ubiquitin-conjugating UBE2L6/UBCH8, leading to degradation of substrate proteins such as CHEK2, JMJD2A/KDM4A and KU80/XRCC5: it is still unclear how the preference toward 'Lys-48'- versus 'Lys-63'-linked ubiquitination is regulated but it could be due to RNF8 ability to interact with specific E2 specific ligases. For instance, interaction with phosphorylated HERC2 promotes the association between RNF8 and UBE2N/UBC13 and favors the specific formation of 'Lys-63'-linked ubiquitin chains. Promotes non-homologous end joining (NHEJ) by promoting the 'Lys-48'-linked ubiquitination and degradation the of KU80/XRCC5. Following DNA damage, mediates the ubiquitination and degradation of JMJD2A/KDM4A in collaboration with RNF168, leading to unmask H4K20me2 mark and promote the recruitment of TP53BP1 at DNA damage sites. Following DNA damage, mediates the ubiquitination and degradation of POLD4/p12, a subunit of DNA polymerase delta. In the absence of POLD4, DNA polymerase delta complex exhibits higher proofreading activity. In addition to its function in damage signaling, also plays a role in higher-order chromatin structure by mediating extensive chromatin decondensation. Involved in the activation of ATM by promoting histone H2B ubiquitination, which indirectly triggers histone H4 'Lys-16' acetylation (H4K16ac), establishing a chromatin environment that promotes efficient activation of ATM kinase. Required in the testis, where it plays a role in the replacement of histones during spermatogenesis. At uncapped telomeres, promotes the joining of deprotected chromosome ends by inducing H2A ubiquitination and TP53BP1 recruitment, suggesting that it may enhance cancer development by aggravating telomere-induced genome instability in case of telomeric crisis. Promotes the assembly of RAD51 at DNA DSBs in the absence of BRCA1 and TP53BP1 Also involved in class switch recombination in immune system, via its role in regulation of DSBs repair. May be required for proper exit from mitosis after spindle checkpoint activation and may regulate cytokinesis. May play a role in the regulation of RXRA-mediated transcriptional activity. Not involved in RXRA ubiquitination by UBE2E2. This Homo sapiens (Human) protein is E3 ubiquitin-protein ligase RNF8.